A 137-amino-acid chain; its full sequence is Partner of bursicon (137 aa).

The first 24 residues, 1–24, serve as a signal peptide directing secretion; it reads MNIMITKIFFLVQLFYIVVSKSSA. 5 disulfide bridges follow: C28–C86, C52–C101, C61–C127, C65–C129, and C83–C132. Residues 28–123 enclose the CTCK domain; it reads CETVASEVHV…NALMEVRLRE (96 aa).

In terms of assembly, heterodimer of burs and pburs.

It localises to the secreted. Functionally, final heterodimeric neurohormone released at the end of the molting cycle, involved in the sclerotization (tanning) of the insect cuticle, melanization and wing spreading. The polypeptide is Partner of bursicon (Bombyx mori (Silk moth)).